A 404-amino-acid polypeptide reads, in one-letter code: Arginine biosynthesis bifunctional protein ArgJ (404 aa).

6 residues coordinate substrate: threonine 166, lysine 189, threonine 200, glutamate 280, asparagine 399, and serine 404. Threonine 200 serves as the catalytic Nucleophile.

It belongs to the ArgJ family. As to quaternary structure, heterotetramer of two alpha and two beta chains.

The protein localises to the cytoplasm. It carries out the reaction N(2)-acetyl-L-ornithine + L-glutamate = N-acetyl-L-glutamate + L-ornithine. The catalysed reaction is L-glutamate + acetyl-CoA = N-acetyl-L-glutamate + CoA + H(+). The protein operates within amino-acid biosynthesis; L-arginine biosynthesis; L-ornithine and N-acetyl-L-glutamate from L-glutamate and N(2)-acetyl-L-ornithine (cyclic): step 1/1. It participates in amino-acid biosynthesis; L-arginine biosynthesis; N(2)-acetyl-L-ornithine from L-glutamate: step 1/4. Functionally, catalyzes two activities which are involved in the cyclic version of arginine biosynthesis: the synthesis of N-acetylglutamate from glutamate and acetyl-CoA as the acetyl donor, and of ornithine by transacetylation between N(2)-acetylornithine and glutamate. This chain is Arginine biosynthesis bifunctional protein ArgJ, found in Mycobacterium bovis (strain ATCC BAA-935 / AF2122/97).